Reading from the N-terminus, the 471-residue chain is GTPase Der (471 aa).

EngA-type G domains are found at residues 5–168 (PVIA…TDLE) and 186–359 (IRVA…DSAF). GTP is bound by residues 11 to 18 (GRPNVGKS), 58 to 62 (DTGGI), 120 to 123 (NKTD), 192 to 199 (GRPNVGKS), 239 to 243 (DTAGV), and 304 to 307 (NKWD). The region spanning 360-444 (IKIGTNELTR…PIRLEFKSGT (85 aa)) is the KH-like domain.

This sequence belongs to the TRAFAC class TrmE-Era-EngA-EngB-Septin-like GTPase superfamily. EngA (Der) GTPase family. In terms of assembly, associates with the 50S ribosomal subunit.

Its function is as follows. GTPase that plays an essential role in the late steps of ribosome biogenesis. In Alcanivorax borkumensis (strain ATCC 700651 / DSM 11573 / NCIMB 13689 / SK2), this protein is GTPase Der.